The sequence spans 329 residues: BTB/POZ domain-containing protein At1g55760 (329 aa).

The BTB domain maps to 164–231 (TDITINASDG…IYGNIQNEDF (68 aa)).

It functions in the pathway protein modification; protein ubiquitination. In terms of biological role, may act as a substrate-specific adapter of an E3 ubiquitin-protein ligase complex (CUL3-RBX1-BTB) which mediates the ubiquitination and subsequent proteasomal degradation of target proteins. The sequence is that of BTB/POZ domain-containing protein At1g55760 from Arabidopsis thaliana (Mouse-ear cress).